A 585-amino-acid chain; its full sequence is Probable G-protein coupled receptor Mth-like 10 (585 aa).

A signal peptide spans 1–32 (MPKKIHQPGGSLYCGVTLLGVLCLVVFRLIPG). At 33-250 (IPFGTYVMAE…DHSTVKIINS (218 aa)) the chain is on the extracellular side. Intrachain disulfides connect Cys-56/Cys-110, Cys-112/Cys-117, Cys-121/Cys-216, Cys-122/Cys-135, and Cys-177/Cys-236. 2 N-linked (GlcNAc...) asparagine glycosylation sites follow: Asn-63 and Asn-72. 5 N-linked (GlcNAc...) asparagine glycosylation sites follow: Asn-142, Asn-152, Asn-157, Asn-198, and Asn-223. Residues 251–271 (YAMMFSIPFMMLTIAVYLLIP) form a helical membrane-spanning segment. The Cytoplasmic segment spans residues 272–280 (ELRNQHGKS). The helical transmembrane segment at 281–301 (LVCYLIGLSVGYSSLCYVQLY) threads the bilayer. Topologically, residues 302–312 (QVDATGVTCKV) are extracellular. The helical transmembrane segment at 313 to 333 (FGYTAYFFFMGAYMWLSVISF) threads the bilayer. At 334 to 353 (DLWHNFRGTRGINRFQEKKR) the chain is on the cytoplasmic side. A helical membrane pass occupies residues 354-374 (FLFYSLYSWGIALVFLAFTYC). Residues 375-404 (AQQLTNLPANLKPGIGDGVYCWLDMSNWAA) lie on the Extracellular side of the membrane. The helical transmembrane segment at 405–425 (MIYFYGPILAIVVANTIMFIM) threads the bilayer. At 426–466 (TAIKIHGVQREMARIIASENSTKNLRTEKDKRFYRAWSNYR) the chain is on the cytoplasmic side. Residues 467 to 487 (FGLFLRLFLIMGITWLTELIS) traverse the membrane as a helical segment. Topologically, residues 488-498 (YFVGSDKGWSK) are extracellular. A helical transmembrane segment spans residues 499-519 (LFYISDLANAMQGFLIFMLFV). The Cytoplasmic segment spans residues 520–585 (MKKKVKHLIT…VDPQKTTIFR (66 aa)).

This sequence belongs to the G-protein coupled receptor 2 family. Mth subfamily.

It localises to the cell membrane. The chain is Probable G-protein coupled receptor Mth-like 10 (mthl10) from Drosophila melanogaster (Fruit fly).